Consider the following 601-residue polypeptide: Cdc42-interacting protein 4 (601 aa).

The tract at residues methionine 1–phenylalanine 117 is required for podosome formation and interaction with AKAP9 and microtubules. The required for translocation to the plasma membrane in response to insulin stretch occupies residues methionine 1 to phenylalanine 117. The F-BAR domain maps to methionine 1–aspartate 264. The stretch at phenylalanine 67 to valine 259 forms a coiled coil. Disordered regions lie at residues glycine 280 to proline 358, aspartate 390 to glutamine 420, and arginine 479 to glycine 543. Residues glutamine 289–threonine 302 are compositionally biased toward polar residues. Residues arginine 293 to glutamate 537 are interaction with CDC42. The segment at arginine 293–asparagine 601 is interaction with PDE6G. 3 positions are modified to phosphoserine: serine 296, serine 298, and serine 299. A compositionally biased stretch (basic residues) spans glycine 314–proline 329. A Phosphoserine modification is found at serine 335. Over residues proline 336–proline 346 the composition is skewed to low complexity. Position 351 is a phosphoserine (serine 351). Positions threonine 388–aspartate 481 form a coiled coil. Positions histidine 393–glutamate 470 constitute an REM-1 domain. Basic and acidic residues predominate over residues leucine 407–glutamine 420. Positions alanine 471–asparagine 601 are required for interaction with FASLG and localization to lysosomes. Serine 482 carries the phosphoserine modification. The tract at residues alanine 487–proline 541 is interaction with DNM2 and WASL. Low complexity predominate over residues proline 497–serine 506. Positions glutamate 529–proline 538 are enriched in acidic residues. The interval glutamate 529 to asparagine 601 is interaction with DNM1 and WASL. The tract at residues proline 538–asparagine 601 is required for podosome formation. The SH3 domain occupies serine 540–asparagine 601. The tract at residues histidine 544–asparagine 601 is interaction with WAS. The tract at residues valine 546–asparagine 601 is interaction with ARHGAP17, DAAM1, DIAPH1 and DIAPH2.

It belongs to the FNBP1 family. Interacts specifically with GTP-bound RHOQ. Interacts with DNM2 and PDE6G. Homodimerizes, the dimers can polymerize end-to-end to form filamentous structures. Interacts specifically with GTP-bound CDC42. Interacts with AKAP9, ARHGAP17, DAAM1, DIAPH1, DIAPH2, DNM1, FASLG/FASL, GAPVD1, LYN, microtubules, SRC, WAS/WASP and WASL/N-WASP. Interacts with the ligand binding domain of the thyroid receptor (TR) in the presence of thyroid hormone. May interact with CTNNB1 and HD/HTT. Post-translationally, tyrosine phosphorylated. Also phosphorylated by PKA. Expressed in brain, colon, heart, kidney, liver, lung, megakaryocyte, ovary, pancreas, peripheral blood lymphocytes, placenta, prostate, skeletal muscle, small intestine, spleen, testis, thymus and trachea.

The protein resides in the cytoplasm. Its subcellular location is the cytoskeleton. The protein localises to the cell cortex. It is found in the lysosome. It localises to the golgi apparatus. The protein resides in the cell membrane. Its subcellular location is the cell projection. The protein localises to the phagocytic cup. It is found in the perinuclear region. Functionally, required for translocation of GLUT4 to the plasma membrane in response to insulin signaling. Required to coordinate membrane tubulation with reorganization of the actin cytoskeleton during endocytosis. Binds to lipids such as phosphatidylinositol 4,5-bisphosphate and phosphatidylserine and promotes membrane invagination and the formation of tubules. Also promotes CDC42-induced actin polymerization by recruiting WASL/N-WASP which in turn activates the Arp2/3 complex. Actin polymerization may promote the fission of membrane tubules to form endocytic vesicles. Required for the formation of podosomes, actin-rich adhesion structures specific to monocyte-derived cells. May be required for the lysosomal retention of FASLG/FASL. This Homo sapiens (Human) protein is Cdc42-interacting protein 4 (TRIP10).